A 695-amino-acid chain; its full sequence is ATP-dependent zinc metalloprotease FTSH 2, chloroplastic (695 aa).

Residues 1–47 (MAASSACLVGNGLSVNTTTKQRLSKHFSGRQTSFSSVIRTSKVNVVK) constitute a chloroplast transit peptide. The N-terminal 35 residues, 48–82 (ASLDGKKKQEGRRDFLKILLGNAGVGLVASGKANA), are a transit peptide targeting the thylakoid. The Lumenal, thylakoid segment spans residues 83-167 (DEQGVSSSRM…AHNAQEDQGS (85 aa)). Residues 168 to 188 (VLFNLIGNLAFPALLIGGLFL) form a helical membrane-spanning segment. Over 189–695 (LSRRSGGGMG…PASAPTPAAV (507 aa)) the chain is Stromal. 267-274 (GPPGTGKT) serves as a coordination point for ATP. His-488 serves as a coordination point for Zn(2+). The active site involves Glu-489. Zn(2+) contacts are provided by His-492 and Asp-566. Residues 673 to 695 (PPENRVPSSTTTTPASAPTPAAV) form a disordered region. The span at 679-695 (PSSTTTTPASAPTPAAV) shows a compositional bias: low complexity.

In the N-terminal section; belongs to the AAA ATPase family. It in the C-terminal section; belongs to the peptidase M41 family. As to quaternary structure, interacts with CHIP and FTSH5. Heterohexamers with FTSH1, FTSH5 and FTSH8. May also form homooligomers. It depends on Zn(2+) as a cofactor. The FTSH2 precursor is ubiquitinated by CHIP in the cytoplasm. In terms of tissue distribution, expressed in cotyledons, cauline and rosette leaves, stems, sepals, flovers and siliques. Very low in roots.

It localises to the plastid. The protein localises to the chloroplast thylakoid membrane. In terms of biological role, part of a complex that function as an ATP-dependent zinc metallopeptidase. Involved in the thylakoid formation and in the removal of damaged D1 in the photosystem II, preventing cell death under high-intensity light conditions, but not involved in thermotolerance. The chain is ATP-dependent zinc metalloprotease FTSH 2, chloroplastic (FTSH2) from Arabidopsis thaliana (Mouse-ear cress).